The chain runs to 1330 residues: Protein PUTATIVE RECOMBINATION INITIATION DEFECT 1 (1330 aa).

A disordered region spans residues 1310 to 1330 (REGRVSPIQEETRQMQTERIV).

Interacts with SPO11-1. According to PubMed:28855712, may interact with SPO11-2; this is in contradiction with PubMed:9461215 which claims that it seems to not interact with SPO11-2. Binds to DFO, PRD3 and MTOPVIB. Facilitates an interaction between PRD3 and DFO. As to expression, expressed in flower buds.

It localises to the nucleus. In terms of biological role, involved in DNA cleavage that forms the double-strand breaks (DSB) that initiate meiotic recombination. This is Protein PUTATIVE RECOMBINATION INITIATION DEFECT 1 from Arabidopsis thaliana (Mouse-ear cress).